The primary structure comprises 501 residues: ADP,ATP carrier protein 3 (501 aa).

The next 12 membrane-spanning stretches (helical) occupy residues 23 to 43 (LKLFIPMALMMLCILFNFGAL), 59 to 79 (IISFLKLWLVLPSCVIFTVLY), 90 to 110 (YIFYIIVGSFLLFFLLFAYII), 146 to 166 (YALMYIFAELWSAVVINLMFW), 183 to 203 (PVLGMVGNIGLIIAGSVLVFF), 227 to 247 (IMLQPIMSIIVTAGIIAMLLF), 293 to 313 (IALLIICYGLLINIVEGPWKA), 326 to 346 (VNFMGRFNIWMGISCVTFMII), 361 to 381 (LLTPIMLSITGLMFFIFIIFI), 387 to 407 (CFGDFNLLYAAIIVGAIQNIL), 446 to 466 (FGKSLGAFIQSLIFIIIPTAT), and 470 to 490 (IIIYLLITFIVMMSLWIWNVI).

The protein belongs to the ADP/ATP translocase tlc family.

The protein resides in the cell membrane. Provides the rickettsial cell with host ATP in exchange for rickettsial ADP. This is an obligate exchange system. This energy acquiring activity is an important component of rickettsial parasitism. The chain is ADP,ATP carrier protein 3 (tlcC) from Rickettsia conorii (strain ATCC VR-613 / Malish 7).